A 140-amino-acid chain; its full sequence is Putative esterase MT1895 (140 aa).

This sequence belongs to the thioesterase PaaI family.

The chain is Putative esterase MT1895 from Mycobacterium tuberculosis (strain CDC 1551 / Oshkosh).